The sequence spans 186 residues: Probable peptidyl-tRNA hydrolase 2 (186 aa).

Belongs to the PTH2 family.

The catalysed reaction is an N-acyl-L-alpha-aminoacyl-tRNA + H2O = an N-acyl-L-amino acid + a tRNA + H(+). Functionally, the natural substrate for this enzyme may be peptidyl-tRNAs which drop off the ribosome during protein synthesis. In Drosophila melanogaster (Fruit fly), this protein is Probable peptidyl-tRNA hydrolase 2.